The chain runs to 176 residues: Dual-action ribosomal maturation protein DarP (176 aa).

It belongs to the DarP family.

The protein localises to the cytoplasm. Member of a network of 50S ribosomal subunit biogenesis factors which assembles along the 30S-50S interface, preventing incorrect 23S rRNA structures from forming. Promotes peptidyl transferase center (PTC) maturation. This chain is Dual-action ribosomal maturation protein DarP, found in Haemophilus ducreyi (strain 35000HP / ATCC 700724).